A 368-amino-acid polypeptide reads, in one-letter code: MTRGFAPILPVEFHKMGSFRRPRPRFMSSPVLSDLPRFQAARQALQLSSSSAWNSVQTAVINVFKGGGLQSNELYALNENIRRLLKSELGSFITDYFQNQLLAKGLFFVEEKIKLCEGENRIEVLAEVWDHFFTETLPTLQAIFYPVQGQELTIRQISLLGFRDLVLLKVKLGDLLLLAQSKLPSSIVQMLLILQSVHEPTGPSESYLQLEELVKQVVSPFLGISGDRSFSGPTYTLARRHSRVRPKVTVLNYASPITAVSRPLNEMVLTPLTEQEGEAYLEKCGSVRRHTVANAHSDIQLLAMATMMHSGLGEEASSENKCLLLPPSFPPPHRQCSSEPNITDNPDGLEEGARGSQEGSELNCASLS.

A Phosphoserine modification is found at S28. The disordered stretch occupies residues 327-368 (PSFPPPHRQCSSEPNITDNPDGLEEGARGSQEGSELNCASLS). Composition is skewed to polar residues over residues 335–344 (QCSSEPNITD) and 357–368 (QEGSELNCASLS).

It belongs to the PROTOR family. As to quaternary structure, interacts with the mammalian target of rapamycin complex 2 (mTORC2) which contains MTOR, MLST8, PRR5, RICTOR, MAPKAP1 and DEPTOR. Interacts with RFFL. Interacts (via C-terminus) with ZFP36 (via C-terminus); this interaction may accelerate ZFP36-mediated mRNA decay during stress. Interacts with RICTOR. Ubiquitinated. Ubiquitination by RFFL promotes proteasomal degradation of PRR5L thereby modifying the substrate-specific activity of the mTORC2 complex. Ubiquitination by RFFL is stimulated by LPA/lysophosphatidic acid.

In terms of biological role, associates with the mTORC2 complex that regulates cellular processes including survival and organization of the cytoskeleton. Regulates the activity of the mTORC2 complex in a substrate-specific manner preventing for instance the specific phosphorylation of PKCs and thereby controlling cell migration. Plays a role in the stimulation of ZFP36-mediated mRNA decay of several ZFP36-associated mRNAs, such as TNF-alpha and GM-CSF, in response to stress. Required for ZFP36 localization to cytoplasmic stress granule (SG) and P-body (PB) in response to stress. This Homo sapiens (Human) protein is Proline-rich protein 5-like (PRR5L).